A 361-amino-acid polypeptide reads, in one-letter code: Probable purine permease 13 (361 aa).

Helical transmembrane passes span 35-55, 68-88, 103-123, 129-151, 156-176, 192-212, 238-258, 268-288, 289-309, and 323-343; these read WILVFISIFFLISAQAIAVLL, WISTLVQTCGFPILYLPLCFL, LVWIYLSLGFAIGLDNLLYSF, SASTYSILCSSQLAFNGVFSYYI, ITCLILFSVLFLSVSAVLVSL, LIGCLCTVFASLIYSLQLSLM, VASCVAVIGLFASGEWMLLSV, VIYVLTLVGTAVSWQLGSVGA, VALIFLVSSLFSNLIGTLSLI, and LTEVKMVAMLIAFMGFGFYIY.

The protein belongs to the purine permeases (TC 2.A.7.14) family.

The protein localises to the membrane. The protein is Probable purine permease 13 (PUP13) of Arabidopsis thaliana (Mouse-ear cress).